The chain runs to 305 residues: UDP-3-O-acyl-N-acetylglucosamine deacetylase (305 aa).

Residues His78, His237, and Asp241 each contribute to the Zn(2+) site. Residue His264 is the Proton donor of the active site.

This sequence belongs to the LpxC family. It depends on Zn(2+) as a cofactor.

It catalyses the reaction a UDP-3-O-[(3R)-3-hydroxyacyl]-N-acetyl-alpha-D-glucosamine + H2O = a UDP-3-O-[(3R)-3-hydroxyacyl]-alpha-D-glucosamine + acetate. It participates in glycolipid biosynthesis; lipid IV(A) biosynthesis; lipid IV(A) from (3R)-3-hydroxytetradecanoyl-[acyl-carrier-protein] and UDP-N-acetyl-alpha-D-glucosamine: step 2/6. Catalyzes the hydrolysis of UDP-3-O-myristoyl-N-acetylglucosamine to form UDP-3-O-myristoylglucosamine and acetate, the committed step in lipid A biosynthesis. This chain is UDP-3-O-acyl-N-acetylglucosamine deacetylase, found in Paraburkholderia xenovorans (strain LB400).